The primary structure comprises 89 residues: Small ribosomal subunit protein uS15 (89 aa).

Belongs to the universal ribosomal protein uS15 family. As to quaternary structure, part of the 30S ribosomal subunit. Forms a bridge to the 50S subunit in the 70S ribosome, contacting the 23S rRNA.

Its function is as follows. One of the primary rRNA binding proteins, it binds directly to 16S rRNA where it helps nucleate assembly of the platform of the 30S subunit by binding and bridging several RNA helices of the 16S rRNA. In terms of biological role, forms an intersubunit bridge (bridge B4) with the 23S rRNA of the 50S subunit in the ribosome. The protein is Small ribosomal subunit protein uS15 of Anaeromyxobacter dehalogenans (strain 2CP-1 / ATCC BAA-258).